The primary structure comprises 268 residues: Undecaprenyl-diphosphatase (268 aa).

A run of 7 helical transmembrane segments spans residues 43–63 (FWNT…VVIY), 83–103 (FVIG…IAGK), 109–129 (LFNP…LMWV), 144–164 (FPLP…IPGV), 184–204 (AAEF…AYDF), 218–238 (IVAI…KAFL), and 246–266 (FTFF…ALAL).

This sequence belongs to the UppP family.

The protein localises to the cell inner membrane. The enzyme catalyses di-trans,octa-cis-undecaprenyl diphosphate + H2O = di-trans,octa-cis-undecaprenyl phosphate + phosphate + H(+). Catalyzes the dephosphorylation of undecaprenyl diphosphate (UPP). Confers resistance to bacitracin. The protein is Undecaprenyl-diphosphatase of Nitrobacter hamburgensis (strain DSM 10229 / NCIMB 13809 / X14).